The primary structure comprises 243 residues: Thiamin pyrophosphokinase 1 (243 aa).

This sequence belongs to the thiamine pyrophosphokinase family.

It carries out the reaction thiamine + ATP = thiamine diphosphate + AMP + H(+). Its pathway is cofactor biosynthesis; thiamine diphosphate biosynthesis; thiamine diphosphate from thiamine: step 1/1. Its function is as follows. Catalyzes the phosphorylation of thiamine to thiamine pyrophosphate. Functions cell non-autonomously. The protein is Thiamin pyrophosphokinase 1 of Caenorhabditis elegans.